The sequence spans 379 residues: ATP phosphoribosyltransferase regulatory subunit (379 aa).

Belongs to the class-II aminoacyl-tRNA synthetase family. HisZ subfamily. As to quaternary structure, heteromultimer composed of HisG and HisZ subunits.

Its subcellular location is the cytoplasm. Its pathway is amino-acid biosynthesis; L-histidine biosynthesis; L-histidine from 5-phospho-alpha-D-ribose 1-diphosphate: step 1/9. Required for the first step of histidine biosynthesis. May allow the feedback regulation of ATP phosphoribosyltransferase activity by histidine. In Paramagnetospirillum magneticum (strain ATCC 700264 / AMB-1) (Magnetospirillum magneticum), this protein is ATP phosphoribosyltransferase regulatory subunit.